The chain runs to 285 residues: Inositol monophosphatase 1 (285 aa).

Mg(2+) contacts are provided by Glu-73, Asp-93, Ile-95, and Asp-96. Residue Glu-73 coordinates substrate. Substrate is bound by residues 95-98 (IDGT), 198-200 (GTA), Glu-217, and Asp-224. Residue Asp-224 participates in Mg(2+) binding.

This sequence belongs to the inositol monophosphatase superfamily. As to quaternary structure, homodimer. Mg(2+) serves as cofactor.

The protein resides in the cytoplasm. It carries out the reaction a myo-inositol phosphate + H2O = myo-inositol + phosphate. The catalysed reaction is 1D-myo-inositol 1-phosphate + H2O = myo-inositol + phosphate. It catalyses the reaction 1D-myo-inositol 2-phosphate + H2O = myo-inositol + phosphate. The enzyme catalyses 1D-myo-inositol 3-phosphate + H2O = myo-inositol + phosphate. It carries out the reaction 1D-myo-inositol 4-phosphate + H2O = myo-inositol + phosphate. The catalysed reaction is 1D-myo-inositol 5-phosphate + H2O = myo-inositol + phosphate. It catalyses the reaction 1D-myo-inositol 6-phosphate + H2O = myo-inositol + phosphate. The enzyme catalyses scyllo-inositol 1-phosphate + H2O = scyllo-inositol + phosphate. It carries out the reaction alpha-D-galactose 1-phosphate + H2O = D-galactose + phosphate. The catalysed reaction is alpha-D-glucose 1-phosphate + H2O = D-glucose + phosphate. It catalyses the reaction D-glucose 6-phosphate + H2O = D-glucose + phosphate. The enzyme catalyses beta-D-fructose 1-phosphate + H2O = D-fructose + phosphate. It carries out the reaction glycerol 2-phosphate + H2O = glycerol + phosphate. The catalysed reaction is adenosine 2'-phosphate + H2O = adenosine + phosphate. It functions in the pathway polyol metabolism; myo-inositol biosynthesis; myo-inositol from D-glucose 6-phosphate: step 2/2. With respect to regulation, inhibited by Li(+), Ca(2+) and Mn(2+), but also by Mg(2+) at concentrations above 3 mM. Functionally, phosphatase involved in the dephosphorylation of myo-inositol monophosphate to generate myo-inositol. Is also able to dephosphorylate scyllo-inositol-phosphate, myo-inositol 1,4-diphosphate, scyllo-inositol-1,3-diphosphate and scyllo-inositol-1,4-diphosphate. Also dephosphorylates in vitro other sugar-phosphates including D-galactose-1-phosphate, glucose-1-phosphate, glucose-6-phosphate, fructose-1-phosphate, beta-glycerophosphate and 2'-AMP. Responsible for the provision of inositol required for synthesis of phosphatidylinositol and polyphosphoinositides, and involved in maintaining normal brain function. Has been implicated as the pharmacological target for lithium Li(+) action in brain. The polypeptide is Inositol monophosphatase 1 (impa1) (Xenopus laevis (African clawed frog)).